A 174-amino-acid chain; its full sequence is Single-stranded DNA-binding protein 1 (174 aa).

Residues 6–111 (VNKVILVGNL…VVVNVGGTMQ (106 aa)) enclose the SSB domain. Residues 55 to 61 (WHRVVLF) mediate DNA binding. The interval 110-174 (MQMLGGRQGG…PMDFDDDIPF (65 aa)) is disordered. A compositionally biased stretch (gly residues) spans 115-133 (GRQGGGAPAGGGQQQGGWG). Residues 134–160 (QPQQPQGGNQFSGGAQSRPQQQAPAAP) show a composition bias toward low complexity. An Important for interaction with partner proteins motif is present at residues 169–174 (DDDIPF).

In terms of assembly, homotetramer. Binds PriA via its C-terminus.

In terms of biological role, plays an important role in DNA replication, recombination and repair. Binds to ssDNA and to an array of partner proteins to recruit them to their sites of action during DNA metabolism. Stimulates the ATPase activity of PriA. One tetramer binds to 26 nucleotides (nt) of ssDNA, a 55 nt piece of ssDNA probably binds 2 tetramers. The chain is Single-stranded DNA-binding protein 1 from Klebsiella pneumoniae subsp. pneumoniae (strain ATCC 700721 / MGH 78578).